The sequence spans 134 residues: Arsenate reductase (134 aa).

Residues C11, C83, and C90 each act as nucleophile in the active site. Disulfide bonds link C11/C83 and C83/C90.

Belongs to the low molecular weight phosphotyrosine protein phosphatase family. Thioredoxin-coupled ArsC subfamily.

It is found in the cytoplasm. It catalyses the reaction arsenate + [thioredoxin]-dithiol + H(+) = arsenite + [thioredoxin]-disulfide + H2O. Functionally, catalyzes the reduction of arsenate [As(V)] to arsenite [As(III)]. The chain is Arsenate reductase from Bacillus cereus (strain 03BB102).